Here is a 435-residue protein sequence, read N- to C-terminus: Acetyltransferase atnC (435 aa).

3 consecutive transmembrane segments (helical) span residues 10–30 (AFAN…FLII), 40–60 (YFGI…APTL), and 68–88 (SFLA…LLIL). N-linked (GlcNAc...) asparagine glycosylation occurs at Asn-203. The next 3 membrane-spanning stretches (helical) occupy residues 306–326 (FLVF…MGLS), 333–353 (IPYF…QAFY), and 370–390 (VVGF…YMFP). An N-linked (GlcNAc...) asparagine glycan is attached at Asn-406. Residues 407–427 (LTEVIGMPMMWGLLGTFGMLV) form a helical membrane-spanning segment.

Belongs to the wax synthase family.

It is found in the membrane. It participates in secondary metabolite biosynthesis; terpenoid biosynthesis. Its function is as follows. Acetyltransferase; part of the gene cluster that mediates the biosynthesis of the meroterpenoids arthripenoids. The pathway begins with the HR-PKS atnH that catalyzes two chain-extension steps to form a reduced triketide, which then primes the SAT domain in the NR-PKS atnG to initiate three more cycles of extension to give a linear hexaketide corresponding to the polyketide part of arthripenoids. The FAD-dependent monooxygenase atnJ then performs an oxidative decarboxylation at C11 of the atnH/atnG product, via an electrophilic aromatic hydroxylation with concomitant ipso-decarboxylation. The membrane-bound polyprenyl transferase atnF then introduces a farnesyl group before the FAD-dependent monooxygenase atnK functions as the first epoxidase on terminal C12'-C13' olefin, followed by a second epoxidation on C7'-C8' catalyzed by atnA. The terpene cyclase/mutase atnI then initiates the sequential tricyclic ring formation through protonation of the terminal epoxide and catalyzes the regioselective and stereoselective 6/6/6-tricyclic ring formation. The cytochrome P450 monooxygenase atnM is responsible for hydroxylating both C1' and C10'. The next steps may involve ketoreduction and acetyl transfer by the ketoreductase atnB and the acetyltransferase atnC, and lead to the production of arthripenoid B, the final biosynthetic product of the atn cluster. The hydroquinone moiety in arthripenoid B is prone to undergo spontaneous oxidation to afford a benzoquinone compound, a key intermediate for generating structure diversity. For instance, addition of a cysteine followed by ring contraction gives arthripenoid A, tautomerization gives the main product arthripenoid C, addition of a molecular of water or amine affords arthripenoid D or E, respectively, and loss of one water forms arthripenoid F. The protein is Acetyltransferase atnC of Arthrinium sp.